We begin with the raw amino-acid sequence, 1102 residues long: Carbamoyl phosphate synthase large chain (1102 aa).

The tract at residues 1-408 (MPKRTDIQSV…ALQKALRSLE (408 aa)) is carboxyphosphate synthetic domain. The ATP site is built by arginine 129, arginine 175, glycine 181, glycine 182, glutamate 214, isoleucine 216, glutamate 221, glycine 247, valine 248, histidine 249, glutamine 291, and glutamate 305. The ATP-grasp 1 domain occupies 138–334 (AVRAKIGHGE…IAKIAAKLAV (197 aa)). 3 residues coordinate Mg(2+): glutamine 291, glutamate 305, and asparagine 307. Positions 291, 305, and 307 each coordinate Mn(2+). The interval 409–551 (KKGSQFTFVG…YFYSSYDEES (143 aa)) is oligomerization domain. Positions 552–954 (EVAPREKPAV…AYAKSQAGAY (403 aa)) are carbamoyl phosphate synthetic domain. The 192-residue stretch at 682–873 (GQVLAEAGLP…LAKAAARISL (192 aa)) folds into the ATP-grasp 2 domain. ATP is bound by residues arginine 718, arginine 757, leucine 759, glutamate 764, glycine 789, isoleucine 790, histidine 791, serine 792, glutamine 832, and glutamate 844. Residues glutamine 832, glutamate 844, and asparagine 846 each coordinate Mg(2+). Residues glutamine 832, glutamate 844, and asparagine 846 each contribute to the Mn(2+) site. An MGS-like domain is found at 955-1100 (GPLPTKGRAF…QEHAEHLTAA (146 aa)). Residues 955–1102 (GPLPTKGRAF…HAEHLTAARD (148 aa)) form an allosteric domain region.

This sequence belongs to the CarB family. As to quaternary structure, composed of two chains; the small (or glutamine) chain promotes the hydrolysis of glutamine to ammonia, which is used by the large (or ammonia) chain to synthesize carbamoyl phosphate. Tetramer of heterodimers (alpha,beta)4. Mg(2+) is required as a cofactor. Requires Mn(2+) as cofactor.

The catalysed reaction is hydrogencarbonate + L-glutamine + 2 ATP + H2O = carbamoyl phosphate + L-glutamate + 2 ADP + phosphate + 2 H(+). The enzyme catalyses hydrogencarbonate + NH4(+) + 2 ATP = carbamoyl phosphate + 2 ADP + phosphate + 2 H(+). It participates in amino-acid biosynthesis; L-arginine biosynthesis; carbamoyl phosphate from bicarbonate: step 1/1. It functions in the pathway pyrimidine metabolism; UMP biosynthesis via de novo pathway; (S)-dihydroorotate from bicarbonate: step 1/3. Its function is as follows. Large subunit of the glutamine-dependent carbamoyl phosphate synthetase (CPSase). CPSase catalyzes the formation of carbamoyl phosphate from the ammonia moiety of glutamine, carbonate, and phosphate donated by ATP, constituting the first step of 2 biosynthetic pathways, one leading to arginine and/or urea and the other to pyrimidine nucleotides. The large subunit (synthetase) binds the substrates ammonia (free or transferred from glutamine from the small subunit), hydrogencarbonate and ATP and carries out an ATP-coupled ligase reaction, activating hydrogencarbonate by forming carboxy phosphate which reacts with ammonia to form carbamoyl phosphate. This chain is Carbamoyl phosphate synthase large chain, found in Streptomyces avermitilis (strain ATCC 31267 / DSM 46492 / JCM 5070 / NBRC 14893 / NCIMB 12804 / NRRL 8165 / MA-4680).